The following is a 322-amino-acid chain: o-succinylbenzoate synthase (322 aa).

K136 functions as the Proton donor in the catalytic mechanism. Mg(2+) is bound by residues D165, E194, and D219. K243 (proton acceptor) is an active-site residue.

It belongs to the mandelate racemase/muconate lactonizing enzyme family. MenC type 1 subfamily. Monomer. It depends on a divalent metal cation as a cofactor.

The catalysed reaction is (1R,6R)-6-hydroxy-2-succinyl-cyclohexa-2,4-diene-1-carboxylate = 2-succinylbenzoate + H2O. Its pathway is quinol/quinone metabolism; 1,4-dihydroxy-2-naphthoate biosynthesis; 1,4-dihydroxy-2-naphthoate from chorismate: step 4/7. It participates in cofactor biosynthesis; phylloquinone biosynthesis. Functionally, converts 2-succinyl-6-hydroxy-2,4-cyclohexadiene-1-carboxylate (SHCHC) to 2-succinylbenzoate (OSB). Does not show N-succinylamino acid racemase (NSAR) activity with N-succinyl-L-phenylglycine as substrate. The protein is o-succinylbenzoate synthase of Thermosynechococcus vestitus (strain NIES-2133 / IAM M-273 / BP-1).